A 232-amino-acid chain; its full sequence is dTTP/UTP pyrophosphatase (232 aa).

Residue Asp103 is the Proton acceptor of the active site.

Belongs to the Maf family. YhdE subfamily. A divalent metal cation serves as cofactor.

The protein localises to the cytoplasm. It catalyses the reaction dTTP + H2O = dTMP + diphosphate + H(+). The catalysed reaction is UTP + H2O = UMP + diphosphate + H(+). In terms of biological role, nucleoside triphosphate pyrophosphatase that hydrolyzes dTTP and UTP. May have a dual role in cell division arrest and in preventing the incorporation of modified nucleotides into cellular nucleic acids. This is dTTP/UTP pyrophosphatase from Bartonella henselae (strain ATCC 49882 / DSM 28221 / CCUG 30454 / Houston 1) (Rochalimaea henselae).